The following is a 335-amino-acid chain: L-tyrosine isonitrile synthase (335 aa).

It belongs to the isocyanide synthase family.

It catalyses the reaction D-ribulose 5-phosphate + L-tyrosine = (2S)-3-(4-hydroxyphenyl)-2-isocyanopropanoate + hydroxyacetone + formaldehyde + phosphate + H2O + H(+). Functionally, involved in the biosynthesis of rhabduscin, a tyrosine derivative which is a potent inhibitor of phenoloxidase, a key component of the insect's innate immune system. Responsible for the synthesis of the isonitrile group on tyrosine using the C2 of ribulose 5-phosphate as the source of the carbon atom. In Xenorhabdus nematophila (strain ATCC 19061 / DSM 3370 / CCUG 14189 / LMG 1036 / NCIMB 9965 / AN6), this protein is L-tyrosine isonitrile synthase.